Reading from the N-terminus, the 820-residue chain is MERRLILWLDEISKDLLPLVGGKAAGLGEMIKAGIPVPPGFVVTSEAYRRFVFETGIAGFIKHILEETIVSGRPEEYEKASELIRSKFVRTPMPPYLRRAIVDAYRKLGTLVGVEEPRVAVRSSATVEDLPEASFAGQQETYLNVKGEEEVVEKVKTAWASLWTARALSYRDSLNIDHETALMAVVVQKMVSSRSSGVMFTIHPVTGEEDKIVIESIWGLGEYIVGGKVTPDRFVVSKSDLEILEVRISRKDKALFYDPDLNENVEIKIPESGEELEDLRRKHPAVAEVVEKYGIRPDAPSLSEKEVKELARLAIKVENHFARPMDIEWAIDFELSPPENILLLQARPETVWSRKKEEAEAKPPEEEAVPEGEVLVRGVPASPGVASGRVKVALTVEEAAKKMEKGDVLVTKMTDPDWVPYMKMASAIVTDEGGMTAHAAIVARELGIPAVVGTGDATKKLKDGMLVTVDGSRGVVYAGAVKTEEAREEEARPELGAAVAEVLSEVYPVTATKIYMNLGHPEEIDRYKHLPFEGIGLMRIEFIISSWIGYHPMYLIEQGRGVYFIDKLAEGVAKVASAIYPRPVVVRFSDFKTNEYRRLKGGEKYETLDERNPMIGWRGVSRYIHPNYEPAFRLEVRAIKKVREEWGLKNVWVMFPFVRTTWELERALKIMEEEGLSRGRDFKVWIMVEVPSTVFLADEFAKMVDGFSIGSNDLTQLVLGVDRDSGFLAKMGYFDERDPAVLRSIEILIEKAHSQGATVSICGQGPSVYPELVEFLVRRGIDSISVNPDAVVRVRRQVASIERRIMLERLEELGSRLSRL.

Catalysis depends on His-438, which acts as the Tele-phosphohistidine intermediate. Substrate is bound by residues Arg-539, Arg-587, Glu-689, Gly-710, Ser-711, Asn-712, and Asp-713. A Mg(2+)-binding site is contributed by Glu-689. Position 713 (Asp-713) interacts with Mg(2+). The Proton donor role is filled by Cys-762.

The protein belongs to the PEP-utilizing enzyme family. Requires Mg(2+) as cofactor.

The enzyme catalyses pyruvate + ATP + H2O = phosphoenolpyruvate + AMP + phosphate + 2 H(+). The protein operates within carbohydrate biosynthesis; gluconeogenesis. Functionally, catalyzes the phosphorylation of pyruvate to phosphoenolpyruvate. The chain is Phosphoenolpyruvate synthase (ppsA) from Aeropyrum pernix (strain ATCC 700893 / DSM 11879 / JCM 9820 / NBRC 100138 / K1).